Reading from the N-terminus, the 512-residue chain is Neuronal acetylcholine receptor subunit alpha-3 (512 aa).

The N-terminal stretch at Met-1 to Ser-23 is a signal peptide. At Ser-24–Ile-242 the chain is on the extracellular side. 2 N-linked (GlcNAc...) asparagine glycosylation sites follow: Asn-47 and Asn-164. 2 cysteine pairs are disulfide-bonded: Cys-151-Cys-165 and Cys-215-Cys-216. The helical transmembrane segment at Pro-243–Pro-258 threads the bilayer. Residues Ser-259–Asp-260 are Cytoplasmic-facing. Residues Cys-261–Val-277 traverse the membrane as a helical segment. Glu-263 is a Na(+) binding site. Residues Phe-278–Tyr-299 are Extracellular-facing. A helical membrane pass occupies residues Leu-300–Leu-318. Over Asn-319–Val-482 the chain is Cytoplasmic. The interval Glu-356–Gln-389 is disordered. Residues Gly-359–Gly-376 show a composition bias toward gly residues. The chain crosses the membrane as a helical span at residues Ile-483–Gly-501. The Extracellular segment spans residues Leu-502 to Ser-512.

Belongs to the ligand-gated ion channel (TC 1.A.9) family. Acetylcholine receptor (TC 1.A.9.1) subfamily. Alpha-3/CHRNA3 sub-subfamily. In terms of assembly, neuronal AChR is composed of two different types of subunits: alpha and beta. CHRNA3/Alpha-3 subunit can be combined to CHRNB2/beta-2 or CHRNB4/beta-4 to give rise to functional receptors. As to expression, expressed in retina and brain.

It is found in the synaptic cell membrane. The protein resides in the cell membrane. The protein localises to the endoplasmic reticulum. It localises to the golgi apparatus. It catalyses the reaction K(+)(in) = K(+)(out). It carries out the reaction Na(+)(in) = Na(+)(out). The enzyme catalyses Ca(2+)(in) = Ca(2+)(out). Activated by a myriad of ligands such as acetylcholine, cytisine, nicotine, choline and epibatidine. The heteropentamer CHRNA3:CHRNB2 activity is blocked by alpha-conotoxins ImI, ImII, PnIA, GID and MII. The heteropentamer CHRNA3:CHRNB4 activity is blocked by the alpha-conotoxin ImI and AuIB. Its function is as follows. Component of neuronal acetylcholine receptors (nAChRs) that function as pentameric, ligand-gated cation channels with high calcium permeability among other activities. nAChRs are excitatory neurotrasnmitter receptors formed by a collection of nAChR subunits known to mediate synaptic transmission in the nervous system and the neuromuscular junction. Each nAchR subunit confers differential attributes to channel properties, including activation, deactivation and desensitization kinetics, pH sensitivity, cation permeability, and binding to allosteric modulators. CHRNA3 forms heteropentameric neuronal acetylcholine receptors with CHRNB2 and CHRNB4. CHRNA3:CHRNB4 being predominant in neurons of the autonomic ganglia, it is known as ganglionic nicotinic receptor. CHRNA3:CHRNB4 also plays an important role in the habenulo-interpeduncular tract, modulating the mesolimbic dopamine system and affecting reward circuits and addiction. Hypothalamic CHRNA3:CHRNB4 nAChR activation by nicotine leads to activation of POMC neurons and a decrease in food intake. Also expressed in the urothelium where it modulates reflex bladder activity by increasing intracellular calcium through extracellular influx and basal ATP release. The polypeptide is Neuronal acetylcholine receptor subunit alpha-3 (chrna3) (Carassius auratus (Goldfish)).